We begin with the raw amino-acid sequence, 142 residues long: MAKKVQAYVKLQVAAGMANPSPPVGPALGQQGVNIMEFCKAFNAKTDSIEKGLPIPVVITVYSDRSFTFVTKTPPAAVLLKKAAGVKSGSGKPNKDKVGKVTRAQVREIAETKAADMTGADVEAMARSIEGTARSMGLVVED.

This sequence belongs to the universal ribosomal protein uL11 family. In terms of assembly, part of the ribosomal stalk of the 50S ribosomal subunit. Interacts with L10 and the large rRNA to form the base of the stalk. L10 forms an elongated spine to which L12 dimers bind in a sequential fashion forming a multimeric L10(L12)X complex. In terms of processing, one or more lysine residues are methylated.

Its function is as follows. Forms part of the ribosomal stalk which helps the ribosome interact with GTP-bound translation factors. The polypeptide is Large ribosomal subunit protein uL11 (Edwardsiella ictaluri (strain 93-146)).